Reading from the N-terminus, the 277-residue chain is Proteasome subunit beta type-7 (277 aa).

A propeptide spans 1-43 (MAAVSVYAPPVGGFSFDNCRRNAVLEADFAKRGYKLPKVRKTG) (removed in mature form). Thr-44 acts as the Nucleophile in catalysis.

It belongs to the peptidase T1B family. In terms of assembly, the 26S proteasome consists of a 20S proteasome core and two 19S regulatory subunits. The 20S proteasome core is a barrel-shaped complex made of 28 subunits that are arranged in four stacked rings. The two outer rings are each formed by seven alpha subunits, and the two inner rings are formed by seven beta subunits. The proteolytic activity is exerted by three beta-subunits PSMB5, PSMB6 and PSMB7. As to quaternary structure, (Microbial infection) Interacts with HIV-1 Tat protein. As to expression, expressed at a low level in colonic mucosa. Up-regulated in colorectal cancer tissues.

The protein resides in the cytoplasm. The protein localises to the nucleus. It carries out the reaction Cleavage of peptide bonds with very broad specificity.. Its function is as follows. Component of the 20S core proteasome complex involved in the proteolytic degradation of most intracellular proteins. This complex plays numerous essential roles within the cell by associating with different regulatory particles. Associated with two 19S regulatory particles, forms the 26S proteasome and thus participates in the ATP-dependent degradation of ubiquitinated proteins. The 26S proteasome plays a key role in the maintenance of protein homeostasis by removing misfolded or damaged proteins that could impair cellular functions, and by removing proteins whose functions are no longer required. Associated with the PA200 or PA28, the 20S proteasome mediates ubiquitin-independent protein degradation. This type of proteolysis is required in several pathways including spermatogenesis (20S-PA200 complex) or generation of a subset of MHC class I-presented antigenic peptides (20S-PA28 complex). Within the 20S core complex, PSMB7 displays a trypsin-like activity. This Homo sapiens (Human) protein is Proteasome subunit beta type-7.